The chain runs to 1218 residues: NACHT, LRR and PYD domains-containing protein 1a allele 4 (1218 aa).

Over residues 1–29 (MGESQSKQESNTRVAQHGSQQDVDPTFQT) the composition is skewed to polar residues. 2 disordered regions span residues 1-44 (MGES…QVEQ) and 71-91 (EMDH…DRSE). A compositionally biased stretch (basic residues) spans 77-87 (RRHSHQSKKKL). One can recognise an NACHT domain in the interval 175–484 (QLVIIEGAAG…EFFAAMSYIL (310 aa)). An ATP-binding site is contributed by 181–188 (GAAGIGKS). LRR repeat units follow at residues 343–364 (KERN…LTLC), 673–693 (NLEE…RSLC), and 730–750 (RLAE…RQLC). Over residues 799-815 (TMPTENTDGEESLTSSK) the composition is skewed to polar residues. Residues 799 to 842 (TMPTENTDGEESLTSSKQQQQQSGDKHMEPLGTDDDFWGPSGPV) are disordered. The segment at 835–968 (FWGPSGPVST…HFAVLENPSF (134 aa)) is ZU5. The region spanning 835 to 1118 (FWGPSGPVST…LRPALPRMAS (284 aa)) is the FIIND domain. Residues 969–1118 (SPMGVLLRMI…LRPALPRMAS (150 aa)) are UPA. A CARD domain is found at 1122–1211 (DAPALLHFVD…HLIMDLLEKS (90 aa)).

Belongs to the NLRP family. In terms of assembly, interacts (via LRR repeats) with BCL2 and BCL2L1 (via the loop between motifs BH4 and BH3). Interacts with NOD2; this interaction is enhanced in the presence of muramyl dipeptide (MDP) and increases IL1B release. Interacts with EIF2AK2/PKR; this interaction requires EIF2AK2 activity, is accompanied by EIF2AK2 autophosphorylation and promotes inflammasome assembly in response to danger-associated signals. Interacts with MEFV; this interaction targets Nlrp1a to degradation by autophagy, hence preventing excessive IL1B- and IL18-mediated inflammation. Interacts with DPP9; leading to inhibit activation of the inflammasome. DPP9 acts via formation of a ternary complex, composed of a DPP9 homodimer, one full-length NLRP1 protein, and one cleaved C-terminus of Nlrp1a (NACHT, LRR and PYD domains-containing protein 1a, C-terminus). Interacts with DPP8; leading to inhibit activation of the inflammasome, probably via formation of a ternary complex with DPP8. Interacts with the C-terminal part of Nlrp1a (NACHT, LRR and PYD domains-containing protein 1a, C-terminus) in absence of pathogens and other damage-associated signals. As to quaternary structure, interacts with the N-terminal part of Nlrp1a (NACHT, LRR and PYD domains-containing protein 1a, N-terminus) in absence of pathogens and other damage-associated signals. Homomultimer; forms the Nlrp1a inflammasome polymeric complex, a filament composed of homopolymers of this form in response to pathogens and other damage-associated signals. The Nlrp1a inflammasome polymeric complex directly recruits pro-caspase-1 (proCASP1) independently of PYCARD/ASC. Interacts (via CARD domain) with CASP1 (via CARD domain); leading to CASP1 activation. Post-translationally, autocatalytically cleaved. Autocatalytic cleavage in FIIND region occurs constitutively, prior to activation signals, and is required for inflammasome activity (IL1B release), possibly by facilitating CASP1 binding. Both N- and C-terminal parts remain associated non-covalently. Ubiquitinated in response to pathogen-associated signals, leading to its degradation by the proteasome and subsequent release of the cleaved C-terminal part of the protein (NACHT, LRR and PYD domains-containing protein 1a, C-terminus), which polymerizes and forms the Nlrp1a inflammasome.

It is found in the cytoplasm. The protein localises to the cytosol. The protein resides in the nucleus. Its subcellular location is the inflammasome. With respect to regulation, activated by pathogens and other damage-associated signals: activation promotes ubiquitination and degradation of the N-terminal part, releasing the cleaved C-terminal part of the protein (NACHT, LRR and PYD domains-containing protein 1a, C-terminus), which polymerizes and forms the Nlrp1a inflammasome. Nlrp1a inflammasome is inhibited by DPP8 and DPP9, which sequester the C-terminal fragment of Nlrp1a (NACHT, LRR and PYD domains-containing protein 1a, C-terminus) in a ternary complex, thereby preventing Nlrp1a oligomerization and activation. Nlrp1a inflammasome is strongly activated by Val-boroPro (Talabostat, PT-100), an inhibitor of dipeptidyl peptidases DPP8 and DPP9. Val-boroPro relieves inhibition of DPP8 and/or DPP9 by promoting disruption of the ternary complex, releasing its C-terminal part from autoinhibition. Not activated by cleavage by B.anthracis lethal toxin (LT) endopeptidase. Functionally, acts as the sensor component of the Nlrp1a inflammasome, which mediates inflammasome activation in response to various pathogen-associated signals, leading to subsequent pyroptosis. Inflammasomes are supramolecular complexes that assemble in the cytosol in response to pathogens and other damage-associated signals and play critical roles in innate immunity and inflammation. Acts as a recognition receptor (PRR): recognizes specific pathogens and other damage-associated signals, such as Val-boroPro inhibitor, and mediates the formation of the inflammasome polymeric complex. In response to pathogen-associated signals, the N-terminal part of Nlrp1a is degraded by the proteasome, releasing the cleaved C-terminal part of the protein (NACHT, LRR and PYD domains-containing protein 1a, C-terminus), which polymerizes to initiate the formation of the inflammasome complex: the inflammasome directly recruits pro-caspase-1 (proCASP1) independently of PYCARD/ASC and promotes caspase-1 (CASP1) activation, which subsequently cleaves and activates inflammatory cytokines IL1B and IL18 and gasdermin-D (GSDMD), leading to pyroptosis. In the absence of GSDMD expression, the Nlrp1a inflammasome is able to recruit and activate CASP8, leading to activation of gasdermin-E (GSDME). Its function is as follows. Constitutes the precursor of the Nlrp1a inflammasome, which mediates autoproteolytic processing within the FIIND domain to generate the N-terminal and C-terminal parts, which are associated non-covalently in absence of pathogens and other damage-associated signals. Regulatory part that prevents formation of the Nlrp1a inflammasome: in absence of pathogens and other damage-associated signals, interacts with the C-terminal part of Nlrp1a (NACHT, LRR and PYD domains-containing protein 1a, C-terminus), preventing activation of the Nlrp1a inflammasome. In response to pathogen-associated signals, this part is ubiquitinated by the N-end rule pathway and degraded by the proteasome, releasing the cleaved C-terminal part of the protein, which polymerizes and forms the Nlrp1a inflammasome. In terms of biological role, constitutes the active part of the Nlrp1a inflammasome. In absence of pathogens and other damage-associated signals, interacts with the N-terminal part of Nlrp1a (NACHT, LRR and PYD domains-containing protein 1a, N-terminus), preventing activation of the Nlrp1a inflammasome. In response to pathogen-associated signals, the N-terminal part of Nlrp1a is degraded by the proteasome, releasing this form, which polymerizes to form the Nlrp1a inflammasome complex: the Nlrp1a inflammasome complex then directly recruits pro-caspase-1 (proCASP1) and promotes caspase-1 (CASP1) activation, leading to gasdermin-D (GSDMD) cleavage and subsequent pyroptosis. The sequence is that of NACHT, LRR and PYD domains-containing protein 1a allele 4 from Rattus norvegicus (Rat).